A 110-amino-acid chain; its full sequence is Iron-sulfur cluster assembly protein CyaY (110 aa).

The protein belongs to the frataxin family.

Involved in iron-sulfur (Fe-S) cluster assembly. May act as a regulator of Fe-S biogenesis. The protein is Iron-sulfur cluster assembly protein CyaY of Pseudomonas putida (strain GB-1).